The sequence spans 102 residues: Small ribosomal subunit protein uS10 (102 aa).

It belongs to the universal ribosomal protein uS10 family. As to quaternary structure, part of the 30S ribosomal subunit.

In terms of biological role, involved in the binding of tRNA to the ribosomes. This Staphylococcus saprophyticus subsp. saprophyticus (strain ATCC 15305 / DSM 20229 / NCIMB 8711 / NCTC 7292 / S-41) protein is Small ribosomal subunit protein uS10.